We begin with the raw amino-acid sequence, 276 residues long: Putative translation initiation factor eIF-2B subunit 2-like (276 aa).

Belongs to the eIF-2B alpha/beta/delta subunits family. Complex of two different subunits.

Its function is as follows. Catalyzes the exchange of initiation factor 2-bound GDP for GTP. The protein is Putative translation initiation factor eIF-2B subunit 2-like of Pyrococcus horikoshii (strain ATCC 700860 / DSM 12428 / JCM 9974 / NBRC 100139 / OT-3).